The chain runs to 342 residues: Biotin synthase (342 aa).

The region spanning 63–290 (NTVQLSTLLS…GAMVRLSAGR (228 aa)) is the Radical SAM core domain. [4Fe-4S] cluster is bound by residues cysteine 78, cysteine 82, and cysteine 85. 4 residues coordinate [2Fe-2S] cluster: cysteine 122, cysteine 153, cysteine 213, and arginine 285.

The protein belongs to the radical SAM superfamily. Biotin synthase family. Homodimer. [4Fe-4S] cluster is required as a cofactor. The cofactor is [2Fe-2S] cluster.

It catalyses the reaction (4R,5S)-dethiobiotin + (sulfur carrier)-SH + 2 reduced [2Fe-2S]-[ferredoxin] + 2 S-adenosyl-L-methionine = (sulfur carrier)-H + biotin + 2 5'-deoxyadenosine + 2 L-methionine + 2 oxidized [2Fe-2S]-[ferredoxin]. The protein operates within cofactor biosynthesis; biotin biosynthesis; biotin from 7,8-diaminononanoate: step 2/2. In terms of biological role, catalyzes the conversion of dethiobiotin (DTB) to biotin by the insertion of a sulfur atom into dethiobiotin via a radical-based mechanism. The protein is Biotin synthase of Cupriavidus pinatubonensis (strain JMP 134 / LMG 1197) (Cupriavidus necator (strain JMP 134)).